The sequence spans 152 residues: Large ribosomal subunit protein bL9 (152 aa).

The protein belongs to the bacterial ribosomal protein bL9 family.

Its function is as follows. Binds to the 23S rRNA. The sequence is that of Large ribosomal subunit protein bL9 from Parasynechococcus marenigrum (strain WH8102).